The primary structure comprises 574 residues: Fusion glycoprotein F0 (574 aa).

Residues 1–25 (MELPILKANAITTILAAVTFCFASS) form the signal peptide. At 26-524 (QNITEEFYQS…HVNAGKSTTN (499 aa)) the chain is on the extracellular side. N-linked (GlcNAc...) asparagine; by host glycosylation is found at Asn-27 and Asn-70. Disulfide bonds link Cys-37/Cys-439, Cys-69/Cys-212, Cys-313/Cys-343, Cys-322/Cys-333, Cys-358/Cys-367, Cys-382/Cys-393, and Cys-416/Cys-422. A coiled-coil region spans residues 76–96 (VKLINQELDKYKNAVTELQLL). N-linked (GlcNAc...) asparagine; by host glycosylation is found at Asn-116, Asn-120, and Asn-126. The tract at residues 137–157 (FLGFLLGVGSAIASGIAVSKV) is fusion peptide. Residues 158–209 (LHLEGEVNKIKSALLSTNKAVVSLSNGVSVLTSKVLDLKNYIDKQLLPIVNK) adopt a coiled-coil conformation. Residues 481–516 (LVFPSDEFDASISQVNEKINQSLAFIRKSDELLHHV) are a coiled coil. N-linked (GlcNAc...) asparagine; by host glycosylation occurs at Asn-500. A helical transmembrane segment spans residues 525–550 (IMITTIIIVIIVILLSLIAVGLLLYC). The S-palmitoyl cysteine; by host moiety is linked to residue Cys-550. The Cytoplasmic segment spans residues 551–574 (KARSTPVTLSKDQLSGINNIAFSN).

The protein belongs to the paramyxoviruses fusion glycoprotein family. In terms of assembly, homotrimer. Heterodimer with fusion protein F2; disulfide-linked. Interacts with host NCL; this interaction plays a role in viral entry into the host cell. As a heterodimer with F2, interacts with host heparan sulfate. As a heterodimer with F2, interacts with host IGF1R; this interaction activates PRKCZ/PKCzeta that recruits NCL/nucleolin from the host nucleus to the plasma membrane. Part of a complex composed of F1, F2 and G glycoproteins. As a heterodimer with F2, interacts with host RHOA; this interaction facilitates virus-induced syncytium formation. Homotrimer. Heterodimer with fusion protein F1; disulfide-linked. As a heterodimer with F1, interacts with host heparan sulfate. As a heterodimer with F1, interacts with host IGF1R; this interaction activates PRKCZ/PKCzeta that recruits NCL/nucleolin from the host nucleus to the plasma membrane. Part of a complex composed of F1, F2 and G glycoproteins. As a heterodimer with F1, interacts with host RHOA; this interaction facilitates virus-induced syncytium formation. In terms of processing, the F glycoprotein is synthesized as a F0 inactive precursor that is heavily N-glycosylated and processed at two sites by a host furin-like protease probably in the Golgi. The cleavage site between p27 and F1 may occur after endocytosis to yield the mature F1 and F2 proteins. Both cleavages are required for membrane fusion and p27 is released from the processed protein.

Its subcellular location is the host Golgi apparatus membrane. The protein localises to the virion membrane. It is found in the host cell membrane. In terms of biological role, inactive precursor that is cleaved at two sites by a furin-like protease to give rise to the mature F1 and F2 fusion glycoproteins. Class I viral fusion protein. Under the current model, the protein has at least 3 conformational states: pre-fusion native state, pre-hairpin intermediate state, and post-fusion hairpin state. During viral and plasma cell membrane fusion, the coiled coil regions assume a trimer-of-hairpins structure, positioning the fusion peptide in close proximity to the C-terminal region of the ectodomain. The formation of this structure appears to drive apposition and subsequent fusion of viral and cellular membranes leading to delivery of the nucleocapsid into the cytoplasm. This fusion is pH independent and occurs at the plasma or endosomal membrane. The trimer of F1-F2 (F protein) also facilitates the attachment to host cell by binding to host heparan sulfate. F protein is involved in the entry into the host cell through the interaction with host IGF1R. This interaction activates PRKCZ/PKCzeta that recruits host NCL/nucleolin to the apical cell surface where it can bind fusion glycoprotein F1. Later in infection, F protein expressed at the plasma membrane of infected cells can mediate fusion with adjacent cells to form syncytia, a cytopathic effect that could lead to tissue necrosis. F protein may trigger p53-dependent apoptosis. Functionally, major determinant of the species specificity of RSV infection. The trimer of F1-F2 (F protein) also facilitates the attachment to host cell by binding to host heparan sulfate. F protein is involved in the entry into the host cell through the interaction with host IGF1R. This interaction activates PRKCZ/PKCzeta that recruits host NCL/nucleolin to the apical cell surface where it can bind fusion glycoprotein F1. Later in infection, F protein expressed at the plasma membrane of infected cells can mediate fusion with adjacent cells to form syncytia, a cytopathic effect that could lead to tissue necrosis. F protein seems to trigger p53-dependent apoptosis. This Homo sapiens (Human) protein is Fusion glycoprotein F0 (F).